A 155-amino-acid chain; its full sequence is uncharacterized protein (155 aa).

Over residues 28–38 the composition is skewed to basic and acidic residues; it reads KKGKDRPREDG. The disordered stretch occupies residues 28-52; that stretch reads KKGKDRPREDGTQQQPSESKGEAAC.

This is an uncharacterized protein from Dryophytes versicolor (chameleon treefrog).